Here is a 777-residue protein sequence, read N- to C-terminus: Ethylene receptor 4 (777 aa).

The next 3 membrane-spanning stretches (helical) occupy residues 49 to 69 (LLIA…ATCA), 77 to 97 (AVLH…LAAF), and 113 to 133 (AAKV…LTFI). The Cu cation site is built by C88 and H92. Positions 184–344 (DAHAILRTTA…VVADQAAVAL (161 aa)) constitute a GAF domain. A Histidine kinase domain is found at 387-521 (AMCHAMRRPV…NTESGACRLS (135 aa)). H390 carries the phosphohistidine; by autocatalysis modification. Residues 645-774 (RVLLADDDAM…ALGAQLCRVL (130 aa)) enclose the Response regulatory domain. The residue at position 696 (D696) is a 4-aspartylphosphate.

Belongs to the ethylene receptor family. The cofactor is Cu cation.

The protein resides in the endoplasmic reticulum membrane. It carries out the reaction ATP + protein L-histidine = ADP + protein N-phospho-L-histidine.. Ethylene receptor related to bacterial two-component regulators. Acts as a redundant negative regulator of ethylene signaling. This is Ethylene receptor 4 from Oryza sativa subsp. indica (Rice).